The primary structure comprises 105 residues: Large ribosomal subunit protein uL24 (105 aa).

Belongs to the universal ribosomal protein uL24 family. As to quaternary structure, part of the 50S ribosomal subunit.

One of two assembly initiator proteins, it binds directly to the 5'-end of the 23S rRNA, where it nucleates assembly of the 50S subunit. Functionally, one of the proteins that surrounds the polypeptide exit tunnel on the outside of the subunit. The sequence is that of Large ribosomal subunit protein uL24 from Francisella philomiragia subsp. philomiragia (strain ATCC 25017 / CCUG 19701 / FSC 153 / O#319-036).